The primary structure comprises 103 residues: Small ribosomal subunit protein uS10 (103 aa).

This sequence belongs to the universal ribosomal protein uS10 family. As to quaternary structure, part of the 30S ribosomal subunit.

In terms of biological role, involved in the binding of tRNA to the ribosomes. The sequence is that of Small ribosomal subunit protein uS10 from Baumannia cicadellinicola subsp. Homalodisca coagulata.